The sequence spans 291 residues: Pyridoxal 5'-phosphate synthase subunit PdxS (291 aa).

Asp23 is a binding site for D-ribose 5-phosphate. Lys80 serves as the catalytic Schiff-base intermediate with D-ribose 5-phosphate. Gly152 serves as a coordination point for D-ribose 5-phosphate. Arg164 contacts D-glyceraldehyde 3-phosphate. D-ribose 5-phosphate is bound by residues Gly213 and 234–235; that span reads GS.

Belongs to the PdxS/SNZ family. In terms of assembly, in the presence of PdxT, forms a dodecamer of heterodimers.

It catalyses the reaction aldehydo-D-ribose 5-phosphate + D-glyceraldehyde 3-phosphate + L-glutamine = pyridoxal 5'-phosphate + L-glutamate + phosphate + 3 H2O + H(+). The protein operates within cofactor biosynthesis; pyridoxal 5'-phosphate biosynthesis. Catalyzes the formation of pyridoxal 5'-phosphate from ribose 5-phosphate (RBP), glyceraldehyde 3-phosphate (G3P) and ammonia. The ammonia is provided by the PdxT subunit. Can also use ribulose 5-phosphate and dihydroxyacetone phosphate as substrates, resulting from enzyme-catalyzed isomerization of RBP and G3P, respectively. The chain is Pyridoxal 5'-phosphate synthase subunit PdxS from Bifidobacterium longum (strain DJO10A).